Reading from the N-terminus, the 506-residue chain is Abscisic acid 8'-hydroxylase 2 (506 aa).

The chain crosses the membrane as a helical span at residues 3–23 (FLLFFVFVTAAVLCFVVPAFL). Cys-437 serves as a coordination point for heme.

It belongs to the cytochrome P450 family. Requires heme as cofactor. As to expression, in internodes and expanding leaves. Weak expression in seedlings.

Its subcellular location is the membrane. It catalyses the reaction 2-cis-(+)-abscisate + reduced [NADPH--hemoprotein reductase] + O2 = (+)-8'-hydroxyabscisate + oxidized [NADPH--hemoprotein reductase] + H2O + H(+). It participates in plant hormone degradation; abscisic acid degradation. Its function is as follows. Involved in the oxidative degradation of abscisic acid. This chain is Abscisic acid 8'-hydroxylase 2 (CYP707A6), found in Oryza sativa subsp. indica (Rice).